Here is a 299-residue protein sequence, read N- to C-terminus: ATP phosphoribosyltransferase (299 aa).

It belongs to the ATP phosphoribosyltransferase family. Long subfamily. It depends on Mg(2+) as a cofactor.

It localises to the cytoplasm. It carries out the reaction 1-(5-phospho-beta-D-ribosyl)-ATP + diphosphate = 5-phospho-alpha-D-ribose 1-diphosphate + ATP. It participates in amino-acid biosynthesis; L-histidine biosynthesis; L-histidine from 5-phospho-alpha-D-ribose 1-diphosphate: step 1/9. Its activity is regulated as follows. Feedback inhibited by histidine. Its function is as follows. Catalyzes the condensation of ATP and 5-phosphoribose 1-diphosphate to form N'-(5'-phosphoribosyl)-ATP (PR-ATP). Has a crucial role in the pathway because the rate of histidine biosynthesis seems to be controlled primarily by regulation of HisG enzymatic activity. The protein is ATP phosphoribosyltransferase of Shewanella sp. (strain ANA-3).